The chain runs to 150 residues: 3-hydroxyacyl-[acyl-carrier-protein] dehydratase FabZ (150 aa).

The active site involves histidine 54.

It belongs to the thioester dehydratase family. FabZ subfamily.

It localises to the cytoplasm. It catalyses the reaction a (3R)-hydroxyacyl-[ACP] = a (2E)-enoyl-[ACP] + H2O. Functionally, involved in unsaturated fatty acids biosynthesis. Catalyzes the dehydration of short chain beta-hydroxyacyl-ACPs and long chain saturated and unsaturated beta-hydroxyacyl-ACPs. This is 3-hydroxyacyl-[acyl-carrier-protein] dehydratase FabZ from Vibrio parahaemolyticus serotype O3:K6 (strain RIMD 2210633).